Reading from the N-terminus, the 161-residue chain is SsrA-binding protein (161 aa).

The segment covering 139–153 has biased composition (basic and acidic residues); that stretch reads RESIKRKEENRELDR. The interval 139–161 is disordered; sequence RESIKRKEENRELDRLRKRRRQE.

This sequence belongs to the SmpB family.

Its subcellular location is the cytoplasm. Functionally, required for rescue of stalled ribosomes mediated by trans-translation. Binds to transfer-messenger RNA (tmRNA), required for stable association of tmRNA with ribosomes. tmRNA and SmpB together mimic tRNA shape, replacing the anticodon stem-loop with SmpB. tmRNA is encoded by the ssrA gene; the 2 termini fold to resemble tRNA(Ala) and it encodes a 'tag peptide', a short internal open reading frame. During trans-translation Ala-aminoacylated tmRNA acts like a tRNA, entering the A-site of stalled ribosomes, displacing the stalled mRNA. The ribosome then switches to translate the ORF on the tmRNA; the nascent peptide is terminated with the 'tag peptide' encoded by the tmRNA and targeted for degradation. The ribosome is freed to recommence translation, which seems to be the essential function of trans-translation. This chain is SsrA-binding protein, found in Syntrophobacter fumaroxidans (strain DSM 10017 / MPOB).